A 155-amino-acid chain; its full sequence is 2-C-methyl-D-erythritol 2,4-cyclodiphosphate synthase (155 aa).

A divalent metal cation is bound by residues Asp-8 and His-10. 4-CDP-2-C-methyl-D-erythritol 2-phosphate contacts are provided by residues 8 to 10 (DVH) and 34 to 35 (HS). An a divalent metal cation-binding site is contributed by His-42. Residues 56 to 58 (DIG), 61 to 65 (FPDSD), 100 to 106 (AQKPKML), 132 to 135 (TTEE), Phe-139, and Lys-142 contribute to the 4-CDP-2-C-methyl-D-erythritol 2-phosphate site.

This sequence belongs to the IspF family. In terms of assembly, homotrimer. The cofactor is a divalent metal cation.

It carries out the reaction 4-CDP-2-C-methyl-D-erythritol 2-phosphate = 2-C-methyl-D-erythritol 2,4-cyclic diphosphate + CMP. Its pathway is isoprenoid biosynthesis; isopentenyl diphosphate biosynthesis via DXP pathway; isopentenyl diphosphate from 1-deoxy-D-xylulose 5-phosphate: step 4/6. Functionally, involved in the biosynthesis of isopentenyl diphosphate (IPP) and dimethylallyl diphosphate (DMAPP), two major building blocks of isoprenoid compounds. Catalyzes the conversion of 4-diphosphocytidyl-2-C-methyl-D-erythritol 2-phosphate (CDP-ME2P) to 2-C-methyl-D-erythritol 2,4-cyclodiphosphate (ME-CPP) with a corresponding release of cytidine 5-monophosphate (CMP). The protein is 2-C-methyl-D-erythritol 2,4-cyclodiphosphate synthase of Clostridium botulinum (strain ATCC 19397 / Type A).